The primary structure comprises 155 residues: Deoxyuridine 5'-triphosphate nucleotidohydrolase (155 aa).

Substrate is bound by residues 74-76, N87, and 91-93; these read RSG and TID.

The protein belongs to the dUTPase family. The cofactor is Mg(2+).

It catalyses the reaction dUTP + H2O = dUMP + diphosphate + H(+). Its pathway is pyrimidine metabolism; dUMP biosynthesis; dUMP from dCTP (dUTP route): step 2/2. Its function is as follows. This enzyme is involved in nucleotide metabolism: it produces dUMP, the immediate precursor of thymidine nucleotides and it decreases the intracellular concentration of dUTP so that uracil cannot be incorporated into DNA. The protein is Deoxyuridine 5'-triphosphate nucleotidohydrolase of Cereibacter sphaeroides (strain ATCC 17023 / DSM 158 / JCM 6121 / CCUG 31486 / LMG 2827 / NBRC 12203 / NCIMB 8253 / ATH 2.4.1.) (Rhodobacter sphaeroides).